A 244-amino-acid chain; its full sequence is Cobalt transport protein CbiM (244 aa).

The first 27 residues, 1 to 27, serve as a signal peptide directing secretion; sequence MVEGMLKTNFRLLFLLIFLLIPTPVLA. The next 6 membrane-spanning stretches (helical) occupy residues 36 to 56, 65 to 85, 102 to 122, 134 to 154, 168 to 188, and 196 to 216; these read PVKW…VGFI, GPGA…LSAL, LAAI…VLIF, TLGA…YGVY, IFLA…VQLA, and LFLS…PLAI.

The protein belongs to the CbiM family. Forms an energy-coupling factor (ECF) transporter complex composed of an ATP-binding protein (A component, CbiO), a transmembrane protein (T component, CbiQ) and 2 possible substrate-capture proteins (S components, CbiM and CbiN) of unknown stoichimetry.

It is found in the cell membrane. The protein operates within cofactor biosynthesis; adenosylcobalamin biosynthesis. Functionally, part of the energy-coupling factor (ECF) transporter complex CbiMNOQ involved in cobalt import. The sequence is that of Cobalt transport protein CbiM from Carboxydothermus hydrogenoformans (strain ATCC BAA-161 / DSM 6008 / Z-2901).